We begin with the raw amino-acid sequence, 399 residues long: Putative 3'-5' exonuclease R431 (399 aa).

The region spanning 118–297 (FQIVDNWIEN…IYNELQLMTN (180 aa)) is the 3'-5' exonuclease domain. The R3H domain occupies 335–399 (ERRLKSIESK…NKYVIITRHC (65 aa)).

The polypeptide is Putative 3'-5' exonuclease R431 (Acanthamoeba polyphaga (Amoeba)).